The sequence spans 270 residues: Tetraspanin-17 (270 aa).

Over 1–19 (MPGKHQQFQDPEVGCCGKY) the chain is Cytoplasmic. The chain crosses the membrane as a helical span at residues 20–40 (FLFGFNIVFWVLGALFLAIGL). Residues 41–63 (WAWGEKGVLSNISALTDLGGLDP) lie on the Extracellular side of the membrane. N-linked (GlcNAc...) asparagine glycosylation is present at N51. A helical membrane pass occupies residues 64–84 (VWLFVVVGGVMSVLGFAGCIG). At 85 to 94 (ALRENTFLLK) the chain is on the cytoplasmic side. A helical transmembrane segment spans residues 95–115 (FFSVFLGLIFFLELAAGILAF). The Extracellular portion of the chain corresponds to 116–234 (VFKDWIRDQL…GQFEKWLQDN (119 aa)). Intrachain disulfides connect C155–C223, C156–C188, C172–C182, and C189–C202. N-linked (GlcNAc...) asparagine glycosylation is present at N171. A helical transmembrane segment spans residues 235–255 (LIVVAGVLVGIALLQIFGLCL). The Cytoplasmic segment spans residues 256–270 (AQNLVSDIKAVKANW).

The protein belongs to the tetraspanin (TM4SF) family. As to quaternary structure, interacts with ADAM10; the interaction influences ADAM10 substrate specificity, endocytosis and turnover.

The protein localises to the cell membrane. Functionally, part of TspanC8 subgroup, composed of 6 members that interact with the transmembrane metalloprotease ADAM10. This interaction is required for ADAM10 exit from the endoplasmic reticulum and for enzymatic maturation and trafficking to the cell surface as well as substrate specificity. Different TspanC8/ADAM10 complexes have distinct substrates. Seems to regulate VE-cadherin expression in endothelial cells probably through interaction with ADAM10, promoting leukocyte transmigration. In Mus musculus (Mouse), this protein is Tetraspanin-17 (Tspan17).